The chain runs to 472 residues: Protein nucleotidyltransferase YdiU (472 aa).

ATP is bound by residues Gly-86, Gly-88, Arg-89, Lys-109, Asp-121, Gly-122, Arg-172, and Arg-179. Catalysis depends on Asp-244, which acts as the Proton acceptor. Mg(2+) contacts are provided by Asn-245 and Asp-254. Asp-254 is an ATP binding site.

The protein belongs to the SELO family. It depends on Mg(2+) as a cofactor. Mn(2+) serves as cofactor.

It carries out the reaction L-seryl-[protein] + ATP = 3-O-(5'-adenylyl)-L-seryl-[protein] + diphosphate. The catalysed reaction is L-threonyl-[protein] + ATP = 3-O-(5'-adenylyl)-L-threonyl-[protein] + diphosphate. The enzyme catalyses L-tyrosyl-[protein] + ATP = O-(5'-adenylyl)-L-tyrosyl-[protein] + diphosphate. It catalyses the reaction L-histidyl-[protein] + UTP = N(tele)-(5'-uridylyl)-L-histidyl-[protein] + diphosphate. It carries out the reaction L-seryl-[protein] + UTP = O-(5'-uridylyl)-L-seryl-[protein] + diphosphate. The catalysed reaction is L-tyrosyl-[protein] + UTP = O-(5'-uridylyl)-L-tyrosyl-[protein] + diphosphate. Its function is as follows. Nucleotidyltransferase involved in the post-translational modification of proteins. It can catalyze the addition of adenosine monophosphate (AMP) or uridine monophosphate (UMP) to a protein, resulting in modifications known as AMPylation and UMPylation. This Ruegeria pomeroyi (strain ATCC 700808 / DSM 15171 / DSS-3) (Silicibacter pomeroyi) protein is Protein nucleotidyltransferase YdiU.